The following is a 400-amino-acid chain: CCA-adding enzyme (400 aa).

ATP-binding residues include G28 and R31. G28 and R31 together coordinate CTP. Positions 41 and 43 each coordinate Mg(2+). The ATP site is built by R112, D155, R158, R161, and R164. Residues R112, D155, R158, R161, and R164 each coordinate CTP.

This sequence belongs to the tRNA nucleotidyltransferase/poly(A) polymerase family. Bacterial CCA-adding enzyme type 3 subfamily. As to quaternary structure, homodimer. The cofactor is Mg(2+).

The catalysed reaction is a tRNA precursor + 2 CTP + ATP = a tRNA with a 3' CCA end + 3 diphosphate. It catalyses the reaction a tRNA with a 3' CCA end + 2 CTP + ATP = a tRNA with a 3' CCACCA end + 3 diphosphate. In terms of biological role, catalyzes the addition and repair of the essential 3'-terminal CCA sequence in tRNAs without using a nucleic acid template. Adds these three nucleotides in the order of C, C, and A to the tRNA nucleotide-73, using CTP and ATP as substrates and producing inorganic pyrophosphate. tRNA 3'-terminal CCA addition is required both for tRNA processing and repair. Also involved in tRNA surveillance by mediating tandem CCA addition to generate a CCACCA at the 3' terminus of unstable tRNAs. While stable tRNAs receive only 3'-terminal CCA, unstable tRNAs are marked with CCACCA and rapidly degraded. This is CCA-adding enzyme from Staphylococcus aureus (strain Mu3 / ATCC 700698).